The following is a 283-amino-acid chain: Large ribosomal subunit protein uL2 (283 aa).

Residues 215-283 (RHKGIRPTVR…IRGRKKRINN (69 aa)) are disordered. Residues 274–283 (IRGRKKRINN) are compositionally biased toward basic residues.

This sequence belongs to the universal ribosomal protein uL2 family. Part of the 50S ribosomal subunit. Forms a bridge to the 30S subunit in the 70S ribosome.

In terms of biological role, one of the primary rRNA binding proteins. Required for association of the 30S and 50S subunits to form the 70S ribosome, for tRNA binding and peptide bond formation. It has been suggested to have peptidyltransferase activity; this is somewhat controversial. Makes several contacts with the 16S rRNA in the 70S ribosome. In Mycoplasma mobile (strain ATCC 43663 / 163K / NCTC 11711) (Mesomycoplasma mobile), this protein is Large ribosomal subunit protein uL2.